Reading from the N-terminus, the 920-residue chain is MAFTRKRQREQQLQLYSKERFSLLLLNLEEYYFEQHTAFHVQHQGSQEERKIRGSLKICSKSVIFEPDAISQPILKIPLRDCLKIGKHGENGANKHFAKAKSWGISLIFSQIYFIKEHNIVAPYKIERGKMEYVFELEVSGKVEDVVETLLQLHRASCLDKLGDQMAMITAILQSRLARTSFDKNRFQSVSEKLHMECKAEMVTPLVTNPGHVCITDTSLYFQPLNGYPKPVVQITLQDVRRIYKRRHGLMPLGLEVFCTDDDLCSDIYLKFYEPQDRDDLYFYIATYLEHHAAEHTAESYMLQWQRGHLSNYQYLLHLNNLADRSCNDLSQYPVFPWIISDYSSPELDLSNPATFRDLSKPVGALNAERLERLLTRYQEMPEPRFMYGSHYSSPGYVLFYLVRIAPEYMLCLQNGRFDNADRMFNSIAETWKNCLDGATDFKELIPEFYDEDVSFLVNSLKLDLGKRQGGQMVDDVDLPAWASSPQDFLQKNKDALESGYVSEHLHEWIDLIFGYKQKGSEAIGAHNVFHPLTYEGGVDLNSIEDPDEKVAMLTQILEFGQTPKQLFVTPHPRRITPKFKSLSQASSYNASLTDSPVSPGEESFEDLTEESRTLAWSNIAKLQLHEQYKIHKEAVTGIAVSCNGSSVFTTSQDSTLKMFSKESKMLQRSISFSNMALSSCLLLPGDTTVISSSWDNNVYFYSIAFGRRQDTLMGHDDAVSKICWHNDRLYSGSWDSTVKVWSGVPAEMPGTKRHQFDLLAELEHDVSVNTINLNAVSTLLVSGTKEGMVNIWDLTTATLLHQTSCHSGTVCDAAFSPDSRHILSTGVDGCLNVIDVQTGMLISSMASEEPQRCFVWDGNSVLSGSRSGELLVWDLLGAKVSERIQGHTGAVTCMWMNEQCSSIITGGEDRQIMFWKLQY.

Residues 176 to 247 (RLARTSFDKN…QDVRRIYKRR (72 aa)) form the GRAM domain. Residues 189-286 (SVSEKLHMEC…DRDDLYFYIA (98 aa)) enclose the BEACH-type PH domain. A BEACH domain is found at 290-575 (EHHAAEHTAE…QLFVTPHPRR (286 aa)). WD repeat units follow at residues 631–661 (IHKEAVTGIAVSCNGSSVFTTSQDSTLKMFS), 673–703 (FSNMALSSCLLLPGDTTVISSSWDNNVYFYS), 715–743 (GHDDAVSKICWHNDRLYSGSWDSTVKVWS), 764–794 (EHDVSVNTINLNAVSTLLVSGTKEGMVNIWD), 806–836 (CHSGTVCDAAFSPDSRHILSTGVDGCLNVID), and 887–917 (GHTGAVTCMWMNEQCSSIITGGEDRQIMFWK).

In terms of biological role, couples the p55 TNF-receptor (TNF-R55 / TNFR1) to neutral sphingomyelinase (N-SMASE). Specifically binds to the N-smase activation domain of TNF-R55. May regulate ceramide production by N-SMASE. In Mus musculus (Mouse), this protein is Protein FAN (Nsmaf).